The following is a 289-amino-acid chain: Small ribosomal subunit protein uS2C (289 aa).

Belongs to the universal ribosomal protein uS2 family. As to quaternary structure, component of the small ribosomal subunit. Mature ribosomes consist of a small (40S) and a large (60S) subunit. The 40S subunit contains about 33 different proteins and 1 molecule of RNA (18S). The 60S subunit contains about 49 different proteins and 3 molecules of RNA (25S, 5.8S and 5S). Interacts with rps21.

It localises to the cytoplasm. Functionally, required for the assembly and/or stability of the 40S ribosomal subunit. Required for the processing of the 20S rRNA-precursor to mature 18S rRNA in a late step of the maturation of 40S ribosomal subunits. This is Small ribosomal subunit protein uS2C (rps0c) from Schizosaccharomyces japonicus (strain yFS275 / FY16936) (Fission yeast).